Here is a 184-residue protein sequence, read N- to C-terminus: Ribose 1,5-bisphosphate phosphokinase PhnN (184 aa).

ATP is bound at residue 11–18; sequence GPSGAGKD.

The protein belongs to the ribose 1,5-bisphosphokinase family.

It catalyses the reaction alpha-D-ribose 1,5-bisphosphate + ATP = 5-phospho-alpha-D-ribose 1-diphosphate + ADP. Its pathway is metabolic intermediate biosynthesis; 5-phospho-alpha-D-ribose 1-diphosphate biosynthesis; 5-phospho-alpha-D-ribose 1-diphosphate from D-ribose 5-phosphate (route II): step 3/3. In terms of biological role, catalyzes the phosphorylation of ribose 1,5-bisphosphate to 5-phospho-D-ribosyl alpha-1-diphosphate (PRPP). The polypeptide is Ribose 1,5-bisphosphate phosphokinase PhnN (Burkholderia mallei (strain SAVP1)).